The chain runs to 611 residues: Procollagen galactosyltransferase 1-A (611 aa).

The N-terminal stretch at 1-24 (MSQAGVDRLLRGLQLLLLVLRLSA) is a signal peptide. 5 N-linked (GlcNAc...) asparagine glycosylation sites follow: asparagine 85, asparagine 173, asparagine 312, asparagine 370, and asparagine 568. The span at 575–591 (WDRAKSRKTQQQEKLRS) shows a compositional bias: basic and acidic residues. The segment at 575 to 611 (WDRAKSRKTQQQEKLRSEALNSPSLGSPFDNTARDEL) is disordered. Residues 608–611 (RDEL) carry the Prevents secretion from ER motif.

This sequence belongs to the glycosyltransferase 25 family.

The protein resides in the endoplasmic reticulum lumen. It catalyses the reaction (5R)-5-hydroxy-L-lysyl-[collagen] + UDP-alpha-D-galactose = (5R)-5-O-(beta-D-galactosyl)-5-hydroxy-L-lysyl-[collagen] + UDP + H(+). In terms of biological role, beta-galactosyltransferase that transfers beta-galactose to hydroxylysine residues of type I collagen. By acting on collagen glycosylation, facilitates the formation of collagen triple helix. The sequence is that of Procollagen galactosyltransferase 1-A (colgalt1-a) from Xenopus laevis (African clawed frog).